Consider the following 374-residue polypeptide: Patatin-2-Kuras 1 (374 aa).

Positions 1–11 are cleaved as a signal peptide; sequence MILATTGSTCA. Residues 20–217 enclose the PNPLA domain; that stretch reads LSIDGGGIKG…TVGDPALLSL (198 aa). Positions 24–29 match the GXGXXG motif; it reads GGGIKG. Positions 63 to 67 match the GXSXG motif; that stretch reads GTSTG. Residue Ser65 is the Nucleophile of the active site. Asn103 carries an N-linked (GlcNAc...) asparagine glycan. The Proton acceptor role is filled by Asp203. The short motif at 203-205 is the DGA/G element; that stretch reads DGA. Residues 309-372 are a coiled coil; it reads ENALTGTTTE…DRKKLRANKA (64 aa).

This sequence belongs to the patatin family. As to expression, tuber.

It localises to the vacuole. Probable lipolytic acyl hydrolase (LAH), an activity which is thought to be involved in the response of tubers to pathogens. This Solanum tuberosum (Potato) protein is Patatin-2-Kuras 1 (pat2-k1).